The following is a 353-amino-acid chain: NADH-quinone oxidoreductase subunit H (353 aa).

Helical transmembrane passes span 8 to 28 (LLVYLVILFGFVIVSVLLFIW), 75 to 95 (GVFWLAPLVAFVPVMLMFAAI), 108 to 128 (IGILYILAVSSVTVIGIFMAG), 148 to 168 (VSYEIPLVLSILGVVMLTGSL), 178 to 198 (SVPFVLLQPLGFFVYLSAAMA), 229 to 249 (LFYLMEYAEVLAISAIATTLF), 258 to 278 (LHPVIWFITKVLIIFMFIIWV), 297 to 317 (FLLPLSLANLVITAFEILAAP), and 319 to 339 (MNTAVLIGINIAVMFGLILLF).

It belongs to the complex I subunit 1 family. NDH-1 is composed of 14 different subunits. Subunits NuoA, H, J, K, L, M, N constitute the membrane sector of the complex.

The protein localises to the cell membrane. The enzyme catalyses a quinone + NADH + 5 H(+)(in) = a quinol + NAD(+) + 4 H(+)(out). Its function is as follows. NDH-1 shuttles electrons from NADH, via FMN and iron-sulfur (Fe-S) centers, to quinones in the respiratory chain. The immediate electron acceptor for the enzyme in this species is believed to be ubiquinone. Couples the redox reaction to proton translocation (for every two electrons transferred, four hydrogen ions are translocated across the cytoplasmic membrane), and thus conserves the redox energy in a proton gradient. This subunit may bind ubiquinone. This is NADH-quinone oxidoreductase subunit H from Dehalococcoides mccartyi (strain ATCC BAA-2266 / KCTC 15142 / 195) (Dehalococcoides ethenogenes (strain 195)).